The chain runs to 226 residues: UPF0502 protein azo0627 (226 aa).

The protein belongs to the UPF0502 family.

The protein is UPF0502 protein azo0627 of Azoarcus sp. (strain BH72).